The following is a 255-amino-acid chain: UPF0246 protein Caul_4480 (255 aa).

Belongs to the UPF0246 family.

This chain is UPF0246 protein Caul_4480, found in Caulobacter sp. (strain K31).